The following is a 183-amino-acid chain: Small ribosomal subunit protein bS20c (183 aa).

A chloroplast-targeting transit peptide spans 1-68 (MAAISMACVS…FQRRGFSVVC (68 aa)). The interval 79 to 99 (AAKRTRQAETRRLRNKARKSE) is disordered.

In terms of assembly, component of the chloroplast small ribosomal subunit (SSU). Mature 70S chloroplast ribosomes of higher plants consist of a small (30S) and a large (50S) subunit. The 30S small subunit contains 1 molecule of ribosomal RNA (16S rRNA) and 24 different proteins. The 50S large subunit contains 3 rRNA molecules (23S, 5S and 4.5S rRNA) and 33 different proteins.

Its subcellular location is the plastid. It is found in the chloroplast. Its function is as follows. Component of the chloroplast ribosome (chloro-ribosome), a dedicated translation machinery responsible for the synthesis of chloroplast genome-encoded proteins, including proteins of the transcription and translation machinery and components of the photosynthetic apparatus. The protein is Small ribosomal subunit protein bS20c (RPS20) of Spinacia oleracea (Spinach).